The primary structure comprises 1345 residues: DNA-directed RNA polymerase subunit beta' (1345 aa).

Zn(2+)-binding residues include Cys60, Cys62, Cys75, and Cys78. Residues Asp536, Asp538, and Asp540 each contribute to the Mg(2+) site. 4 residues coordinate Zn(2+): Cys895, Cys974, Cys981, and Cys984. The interval 1325–1345 is disordered; sequence DDNDNPVDFGDEFRIDPDELK. The span at 1335–1345 shows a compositional bias: basic and acidic residues; it reads DEFRIDPDELK.

Belongs to the RNA polymerase beta' chain family. In terms of assembly, the RNAP catalytic core consists of 2 alpha, 1 beta, 1 beta' and 1 omega subunit. When a sigma factor is associated with the core the holoenzyme is formed, which can initiate transcription. Mg(2+) serves as cofactor. Requires Zn(2+) as cofactor.

It carries out the reaction RNA(n) + a ribonucleoside 5'-triphosphate = RNA(n+1) + diphosphate. Its function is as follows. DNA-dependent RNA polymerase catalyzes the transcription of DNA into RNA using the four ribonucleoside triphosphates as substrates. The sequence is that of DNA-directed RNA polymerase subunit beta' from Bifidobacterium animalis subsp. lactis (strain AD011).